Here is a 552-residue protein sequence, read N- to C-terminus: Transcription factor lcsF (552 aa).

4 disordered regions span residues 1–132 (MAPA…DLDP), 169–209 (TSSY…ASLS), 232–258 (EATS…HWSS), and 297–349 (ELTS…QHGA). Residues 31 to 55 (KDRKEKKRIQNRVAQRSYRSRMKAR) are basic motif. A bZIP domain is found at 31-76 (KDRKEKKRIQNRVAQRSYRSRMKARLGELQSRLQAHEEQKAKEEAE). The interval 56 to 63 (LGELQSRL) is leucine-zipper. A compositionally biased stretch (basic and acidic residues) spans 64–79 (QAHEEQKAKEEAERCD). Polar residues-rich tracts occupy residues 98–119 (TPPS…NSAS) and 169–186 (TSSY…SLSQ). Residues 298-347 (LTSTGDLPNATWRPSQQFSGPETTPRSHNAENPTQQQSPINDDTPSTTQH) show a composition bias toward polar residues.

This sequence belongs to the bZIP family.

The protein resides in the nucleus. Its function is as follows. Transcription factor that regulates the expression of the gene cluster that mediates the biosynthesis of the lipopeptide antibiotics leucinostatins that show extensive biological activities, including antimalarial, antiviral, antibacterial, antifungal, and antitumor activities, as well as phytotoxic. All 20 genes in the cluster are up-regulated to some extent by lcsF, with the exception of lcsL and lcsP, which are down-regulated. The protein is Transcription factor lcsF of Purpureocillium lilacinum (Paecilomyces lilacinus).